A 353-amino-acid chain; its full sequence is DNA integrity scanning protein DisA (353 aa).

Residues 6–144 (DKELMNILKI…GGIKYVLRDS (139 aa)) enclose the DAC domain. Residues Gly73, Leu91, and 104-108 (TRHRT) contribute to the ATP site.

It belongs to the DisA family. As to quaternary structure, homooctamer. Requires Mg(2+) as cofactor.

It catalyses the reaction 2 ATP = 3',3'-c-di-AMP + 2 diphosphate. In terms of biological role, participates in a DNA-damage check-point that is active prior to asymmetric division when DNA is damaged. DisA forms globular foci that rapidly scan along the chromosomes during sporulation, searching for lesions. When a lesion is present, DisA pauses at the lesion site. This triggers a cellular response that culminates in a temporary block in sporulation initiation. Its function is as follows. Also has diadenylate cyclase activity, catalyzing the condensation of 2 ATP molecules into cyclic di-AMP (c-di-AMP). c-di-AMP acts as a signaling molecule that couples DNA integrity with progression of sporulation. The rise in c-di-AMP level generated by DisA while scanning the chromosome, operates as a positive signal that advances sporulation; upon encountering a lesion, the DisA focus arrests at the damaged site and halts c-di-AMP synthesis. The polypeptide is DNA integrity scanning protein DisA (Clostridium botulinum (strain Kyoto / Type A2)).